Consider the following 369-residue polypeptide: Tsukushi (369 aa).

A signal peptide spans 1–19; that stretch reads MQFLAWFNMLLLLPCFSTT. Positions 20-60 constitute an LRRNT domain; the sequence is KTCFPGCHCEVESFGLFDSFSLTKVDCSGIGSHIVPVPIPL. LRR repeat units follow at residues 61–81, 87–108, 111–132, 134–155, 161–181, 184–205, 206–226, 229–248, 254–276, 279–300, and 303–323; these read DTSY…SMLT, TLVS…TFSR, YLES…CFSS, PLGD…VFAS, PLNV…HEKS, NIQN…QGIP, LRYL…DFKG, GLIH…SPYS, ALQV…VIFG, SIQE…VLKY, and SLKS…KEGQ. The N-linked (GlcNAc...) asparagine glycan is linked to Asn-76. Asn-189 is a glycosylation site (N-linked (GlcNAc...) asparagine). Asn-284 carries an N-linked (GlcNAc...) asparagine glycan.

In terms of assembly, forms a ternary complex with chordin/CHRD and BMP4. Interacts with FZD4 (via FZ domain); competes with WNT2B for binding to FZD4, inhibiting Wnt signaling and repressing peripheral eye development. Interacts with BMP4; shows stronger interaction with BMP4 than isoform 2. Interacts with DVR1/VG1; the interaction is inhibited by BMP4. Interacts with BMP7. As to quaternary structure, interacts with FZD4 (via FZ domain); competes with WNT2B for binding to FZD4, inhibiting Wnt signaling and repressing peripheral eye development. Interacts with BMP4; shows weaker interaction with BMP4 than isoform 1. Interacts with DVR1/VG1; the interaction is inhibited by BMP4. Interacts with BMP7. In terms of processing, N-glycosylated. As to expression, during embryonic development, expressed in the middle primitive streak and Hensen's node. Expressed in the peripheral region of the developing eye. Expressed in the presomitic mesoderm during somitogenesis in a NOTCH-dependent manner.

It is found in the secreted. Functionally, contributes to various developmental events through its interactions with multiple signaling pathways. Dorsalizing factor involved in the induction of Hensen's node by inhibiting bone morphogenetic proteins during gastrulation and by enhancing DVR1/VG1 activity. Wnt signaling inhibitor which competes with WNT2B for binding to Wnt receptor FZD4 and represses WNT2B-dependent development of the peripheral eye. Shows strong bone morphogenetic protein antagonistic activity. In terms of biological role, shows weak bone morphogenetic protein antagonistic activity. This is Tsukushi (TSKU) from Gallus gallus (Chicken).